The chain runs to 433 residues: Enolase (433 aa).

Residue Q164 coordinates (2R)-2-phosphoglycerate. The active-site Proton donor is the E206. Mg(2+) contacts are provided by D243, E289, and D316. Residues K341, R370, S371, and K392 each coordinate (2R)-2-phosphoglycerate. The active-site Proton acceptor is K341.

Belongs to the enolase family. It depends on Mg(2+) as a cofactor.

Its subcellular location is the cytoplasm. It is found in the secreted. The protein localises to the cell surface. The catalysed reaction is (2R)-2-phosphoglycerate = phosphoenolpyruvate + H2O. It functions in the pathway carbohydrate degradation; glycolysis; pyruvate from D-glyceraldehyde 3-phosphate: step 4/5. In terms of biological role, catalyzes the reversible conversion of 2-phosphoglycerate (2-PG) into phosphoenolpyruvate (PEP). It is essential for the degradation of carbohydrates via glycolysis. The polypeptide is Enolase (Borreliella burgdorferi (strain ZS7) (Borrelia burgdorferi)).